Reading from the N-terminus, the 447-residue chain is Argininosuccinate synthase (447 aa).

ATP contacts are provided by residues 17–25 and Ala-43; that span reads AFSGGLDTS. Residue Tyr-99 participates in L-citrulline binding. Positions 129 and 131 each coordinate ATP. L-aspartate contacts are provided by Thr-131, Asn-135, and Asp-136. Residue Asn-135 participates in L-citrulline binding. Residue Asp-136 participates in ATP binding. Residues Arg-139 and Ser-192 each contribute to the L-citrulline site. ATP is bound at residue Asp-194. L-citrulline is bound by residues Thr-201, Glu-203, and Glu-280.

The protein belongs to the argininosuccinate synthase family. Type 2 subfamily. As to quaternary structure, homotetramer.

It is found in the cytoplasm. The enzyme catalyses L-citrulline + L-aspartate + ATP = 2-(N(omega)-L-arginino)succinate + AMP + diphosphate + H(+). Its pathway is amino-acid biosynthesis; L-arginine biosynthesis; L-arginine from L-ornithine and carbamoyl phosphate: step 2/3. The chain is Argininosuccinate synthase from Salmonella paratyphi B (strain ATCC BAA-1250 / SPB7).